The primary structure comprises 331 residues: 3-dehydrosphinganine reductase TSC10B (331 aa).

Over 1 to 7 (MAAIFSL) the chain is Lumenal. A helical membrane pass occupies residues 8-28 (FLFFILFIVSLLIILSFIVRP). Over 29 to 262 (RSVTIPIKFR…ICFDGIKAGK (234 aa)) the chain is Cytoplasmic. NADPH contacts are provided by Gly-44, Ser-46, Ser-47, Gly-48, Arg-69, Lys-73, and Asp-95. The short motif at 44–48 (GGSSG) is the GXSXG element. Residue Ser-172 is the Proton donor of the active site. Tyr-186 functions as the Proton acceptor in the catalytic mechanism. NADP(+) contacts are provided by Tyr-186 and Lys-190. Residue Lys-190 is the Lowers pKa of active site Tyr of the active site. A helical membrane pass occupies residues 263-283 (FTVTCHFIGFLLSIASTGMSP). Topologically, residues 284-286 (QGS) are lumenal. A helical transmembrane segment spans residues 287–307 (FWLALTEVMFGGLIRLASLVF). At 308–331 (QWQWYKTIEKWSQRNKKEVNSKLA) the chain is on the cytoplasmic side.

It belongs to the short-chain dehydrogenases/reductases (SDR) family. Expressed in roots, leaves, stems and flowers.

Its subcellular location is the endoplasmic reticulum membrane. It carries out the reaction sphinganine + NADP(+) = 3-oxosphinganine + NADPH + H(+). It participates in lipid metabolism; sphingolipid metabolism. Its function is as follows. Catalyzes the reduction of 3'-oxosphinganine (3-ketodihydrosphingosine/KDS) to sphinganine (dihydrosphingosine/DHS), the second step of de novo sphingolipid biosynthesis. In plants, sphingolipids seems to play a critical role in mineral ion homeostasis, most likely through their involvement in the ion transport functionalities of membrane systems in the root. Is stereospecific for D-erythro-DHS production and does not produce L-threo-DHS. In Arabidopsis thaliana (Mouse-ear cress), this protein is 3-dehydrosphinganine reductase TSC10B (TSC10B).